The sequence spans 175 residues: Centrosomal protein 20 (175 aa).

The tract at residues 1–104 (MATIAELKAV…IVEDANGKSV (104 aa)) is necessary and sufficient for homooligomerization and localization to centrosomes and pericentriolar satellites. Positions 49-81 (ENLLINELIREYLEFNKYKYSASVLTAEAGQPE) constitute a LisH domain. The disordered stretch occupies residues 137 to 166 (RQNLAKPSTERNQKDRIPEPGRMAGTSIEE). The segment covering 144–155 (STERNQKDRIPE) has biased composition (basic and acidic residues).

This sequence belongs to the CEP43 family. In terms of assembly, homooligomer; probably required for localization to centrosomes.

It is found in the cell projection. Its subcellular location is the cilium. The protein localises to the cytoplasm. It localises to the cytoskeleton. The protein resides in the cilium basal body. It is found in the microtubule organizing center. Its subcellular location is the centrosome. The protein localises to the cytoplasmic granule. It localises to the centriolar satellite. Functionally, involved in the biogenesis of cilia. Required for the recruitment of PLK1 to centrosomes and S phase progression. This Gallus gallus (Chicken) protein is Centrosomal protein 20 (CEP20).